The primary structure comprises 134 residues: MSTTFCSSVSMQATSLAATTRISFQKPALVSTTNLSFNLRRSIPTRFSISCAAKPETVEKVSKIVKKQLSLKDDQKVVAETKFADLGADSLDTVEIVMGLEEEFDIEMAEEKAQKIATVEEAAELIEELVQLKK.

The N-terminal 51 residues, 1-51, are a transit peptide targeting the chloroplast; the sequence is MSTTFCSSVSMQATSLAATTRISFQKPALVSTTNLSFNLRRSIPTRFSISC. Residues 55–130 form the Carrier domain; sequence PETVEKVSKI…EAAELIEELV (76 aa). Serine 90 is modified (O-(pantetheine 4'-phosphoryl)serine).

Belongs to the acyl carrier protein (ACP) family. Post-translationally, 4'-phosphopantetheine is transferred from CoA to a specific serine of apo-ACP by acpS. This modification is essential for activity because fatty acids are bound in thioester linkage to the sulfhydryl of the prosthetic group.

Its subcellular location is the plastid. The protein resides in the chloroplast. It functions in the pathway lipid metabolism; fatty acid biosynthesis. Functionally, carrier of the growing fatty acid chain in fatty acid biosynthesis. This Brassica campestris (Field mustard) protein is Acyl carrier protein SF2, chloroplastic (Acl1.1).